The primary structure comprises 374 residues: Chaperone protein DnaJ (374 aa).

One can recognise a J domain in the interval 3–67 (DFYQILGVSR…ETRARYDQFG (65 aa)). Residues 99 to 118 (GQSSQGGRSQRRGPQQGDDL) form a disordered region. The segment covering 103–115 (QGGRSQRRGPQQG) has biased composition (low complexity). Residues 132–214 (GQQREINIPH…CGGNGVKQVR (83 aa)) form a CR-type zinc finger. Residues C145, C148, C162, C165, C188, C191, C202, and C205 each contribute to the Zn(2+) site. CXXCXGXG motif repeat units follow at residues 145–152 (CEVCRGTG), 162–169 (CTTCGGSG), 188–195 (CPTCNGVG), and 202–209 (CTSCGGNG).

This sequence belongs to the DnaJ family. Homodimer. Zn(2+) is required as a cofactor.

It is found in the cytoplasm. Functionally, participates actively in the response to hyperosmotic and heat shock by preventing the aggregation of stress-denatured proteins and by disaggregating proteins, also in an autonomous, DnaK-independent fashion. Unfolded proteins bind initially to DnaJ; upon interaction with the DnaJ-bound protein, DnaK hydrolyzes its bound ATP, resulting in the formation of a stable complex. GrpE releases ADP from DnaK; ATP binding to DnaK triggers the release of the substrate protein, thus completing the reaction cycle. Several rounds of ATP-dependent interactions between DnaJ, DnaK and GrpE are required for fully efficient folding. Also involved, together with DnaK and GrpE, in the DNA replication of plasmids through activation of initiation proteins. This Prochlorococcus marinus subsp. pastoris (strain CCMP1986 / NIES-2087 / MED4) protein is Chaperone protein DnaJ.